We begin with the raw amino-acid sequence, 412 residues long: Subtilisin-like protease 6 (412 aa).

The signal sequence occupies residues M1–G20. The propeptide occupies A21 to L127. An Inhibitor I9 domain is found at K36–A120. Residues S135–K412 form the Peptidase S8 domain. Residues D167 and H198 each act as charge relay system in the active site. N-linked (GlcNAc...) asparagine glycosylation is found at N252, N264, and N325. S358 acts as the Charge relay system in catalysis. A glycan (N-linked (GlcNAc...) asparagine) is linked at N408.

It belongs to the peptidase S8 family.

It is found in the secreted. Its function is as follows. Secreted subtilisin-like serine protease with keratinolytic activity that contributes to pathogenicity. In Trichophyton verrucosum (strain HKI 0517), this protein is Subtilisin-like protease 6 (SUB6).